A 151-amino-acid polypeptide reads, in one-letter code: Probable chemoreceptor glutamine deamidase CheD (151 aa).

It belongs to the CheD family.

It catalyses the reaction L-glutaminyl-[protein] + H2O = L-glutamyl-[protein] + NH4(+). In terms of biological role, probably deamidates glutamine residues to glutamate on methyl-accepting chemotaxis receptors (MCPs), playing an important role in chemotaxis. The polypeptide is Probable chemoreceptor glutamine deamidase CheD (Methanosarcina barkeri (strain Fusaro / DSM 804)).